A 471-amino-acid chain; its full sequence is Alpha-galactosidase 2 (471 aa).

Residues 1-18 form the signal peptide; it reads MFAFYFLTACISLKGVFG. The cysteines at positions 42 and 74 are disulfide-linked. Residues aspartate 72 and aspartate 73 each coordinate substrate. Asparagine 105 is a glycosylation site (N-linked (GlcNAc...) asparagine). A disulfide bridge links cysteine 121 with cysteine 151. Residue lysine 147 coordinates substrate. Residue aspartate 149 is the Nucleophile of the active site. N-linked (GlcNAc...) asparagine glycosylation is present at asparagine 175. Residue arginine 205 coordinates substrate. Catalysis depends on aspartate 209, which acts as the Proton donor. Cystine bridges form between cysteine 221–cysteine 237 and cysteine 223–cysteine 230. Glutamine 251 provides a ligand contact to substrate. N-linked (GlcNAc...) asparagine glycans are attached at residues asparagine 270, asparagine 370, asparagine 403, asparagine 413, asparagine 422, asparagine 435, and asparagine 454.

It belongs to the glycosyl hydrolase 27 family. As to quaternary structure, homotetramer.

It localises to the secreted. The catalysed reaction is Hydrolysis of terminal, non-reducing alpha-D-galactose residues in alpha-D-galactosides, including galactose oligosaccharides, galactomannans and galactolipids.. The polypeptide is Alpha-galactosidase 2 (MEL2) (Saccharomyces cerevisiae (Baker's yeast)).